The sequence spans 361 residues: tRNA/tmRNA (uracil-C(5))-methyltransferase (361 aa).

S-adenosyl-L-methionine is bound by residues Gln-185, Tyr-213, Asn-218, Glu-234, and Asp-294. Cys-319 acts as the Nucleophile in catalysis. The active-site Proton acceptor is the Glu-353.

It belongs to the class I-like SAM-binding methyltransferase superfamily. RNA M5U methyltransferase family. TrmA subfamily.

It catalyses the reaction uridine(54) in tRNA + S-adenosyl-L-methionine = 5-methyluridine(54) in tRNA + S-adenosyl-L-homocysteine + H(+). It carries out the reaction uridine(341) in tmRNA + S-adenosyl-L-methionine = 5-methyluridine(341) in tmRNA + S-adenosyl-L-homocysteine + H(+). Functionally, dual-specificity methyltransferase that catalyzes the formation of 5-methyluridine at position 54 (m5U54) in all tRNAs, and that of position 341 (m5U341) in tmRNA (transfer-mRNA). This is tRNA/tmRNA (uracil-C(5))-methyltransferase from Azotobacter vinelandii (strain DJ / ATCC BAA-1303).